The primary structure comprises 553 residues: Aminotransferase FUM8 (553 aa).

The signal sequence occupies residues 1–25; the sequence is MSPAPAILALRRVYNFCLLVDEAHG. The N-linked (GlcNAc...) asparagine glycan is linked to Asn-480.

This sequence belongs to the class-II pyridoxal-phosphate-dependent aminotransferase family. BioF subfamily. Pyridoxal 5'-phosphate is required as a cofactor.

Its subcellular location is the endoplasmic reticulum. The protein operates within mycotoxin biosynthesis. In terms of biological role, aminotransferase; part of the gene cluster that mediates the biosynthesis of fumonisins B1 (FB1), B2 (FB2), B3 (FB3), and B4 (FB4), which are carcinogenic mycotoxins. Within the pathway, FUM8 catalyzes the release of the C-18 polyketide chain from the highly reducing polyketide synthase FUM1 by a nucleophilic attack of a carbanion, which is derived from R-carbon of alanine by decarboxylation, on the carbonyl carbon of polyketide acyl chain. The biosynthesis starts with the FUM1-catalyzed carbon chain assembly from one molecule of acetyl-CoA, eight molecules of malonyl-CoA, and two molecules of methionine (in S-adenosyl form). The C18 polyketide chain is released from the enzyme by a nucleophilic attack of a carbanion, which is derived from R-carbon of alanine by decarboxylation, on the carbonyl carbon of polyketide acyl chain. This step is catalyzed by the pyridoxal 5'-phosphate-dependent aminoacyl transferase FUM8. The resultant 3-keto intermediate is then stereospecifically reduced to a 3-hydroxyl product by reductase FUM13. Subsequent oxidations at C-10 by the cytochrome P450 monooxygenase FUM2, C-14 and C-15 by FUM6, FUM12 or FUM15, tricarballylic esterification of the hydroxyl groups on C-14 and C-15 by acyltransferase FUM14, and C-5 hydroxylation by 2-keto-glutarate-dependent dioxygenase FUM3 furnish the biosynthesis of fumonisins. The tricarballylic moieties are most likely derived from the citric acid cycle, and their addition to the carbon backbone may involve FUM7, FUM10, FUM11 and FUM14. The sequence is that of Aminotransferase FUM8 from Gibberella moniliformis (strain M3125 / FGSC 7600) (Maize ear and stalk rot fungus).